The following is a 191-amino-acid chain: Peptidyl-tRNA hydrolase (191 aa).

Tyrosine 14 provides a ligand contact to tRNA. The active-site Proton acceptor is histidine 19. TRNA is bound by residues phenylalanine 64, asparagine 66, and asparagine 112.

The protein belongs to the PTH family. In terms of assembly, monomer.

It localises to the cytoplasm. The catalysed reaction is an N-acyl-L-alpha-aminoacyl-tRNA + H2O = an N-acyl-L-amino acid + a tRNA + H(+). Hydrolyzes ribosome-free peptidyl-tRNAs (with 1 or more amino acids incorporated), which drop off the ribosome during protein synthesis, or as a result of ribosome stalling. Its function is as follows. Catalyzes the release of premature peptidyl moieties from peptidyl-tRNA molecules trapped in stalled 50S ribosomal subunits, and thus maintains levels of free tRNAs and 50S ribosomes. The chain is Peptidyl-tRNA hydrolase from Novosphingobium aromaticivorans (strain ATCC 700278 / DSM 12444 / CCUG 56034 / CIP 105152 / NBRC 16084 / F199).